The primary structure comprises 313 residues: Ribosomal RNA small subunit methyltransferase H (313 aa).

S-adenosyl-L-methionine contacts are provided by residues G35–H37, D55, F80, D102, and Q109.

The protein belongs to the methyltransferase superfamily. RsmH family.

It is found in the cytoplasm. It catalyses the reaction cytidine(1402) in 16S rRNA + S-adenosyl-L-methionine = N(4)-methylcytidine(1402) in 16S rRNA + S-adenosyl-L-homocysteine + H(+). Its function is as follows. Specifically methylates the N4 position of cytidine in position 1402 (C1402) of 16S rRNA. The chain is Ribosomal RNA small subunit methyltransferase H from Shewanella loihica (strain ATCC BAA-1088 / PV-4).